We begin with the raw amino-acid sequence, 557 residues long: Phosphoribosylaminoimidazole carboxylase, chloroplastic (557 aa).

The ATP-grasp domain occupies 108–293; it reads KVALLPAWIP…QFEQHLPAVV (186 aa). 132–189 is an ATP binding site; that stretch reads WDSLDIHFMIKSRRLAYDGRGNFVAKSEEELSSAVDALGGFDRGLYAEKWAPFVKELA. The tract at residues 387–557 is AIR carboxylase catalytic subunit; sequence CSTLLGFIMG…HGWESYLKNS (171 aa).

It in the C-terminal section; belongs to the AIR carboxylase family. Class I subfamily.

Its subcellular location is the plastid. The protein resides in the chloroplast. It catalyses the reaction 5-amino-1-(5-phospho-D-ribosyl)imidazole-4-carboxylate + H(+) = 5-amino-1-(5-phospho-beta-D-ribosyl)imidazole + CO2. The protein operates within purine metabolism; IMP biosynthesis via de novo pathway; 5-amino-1-(5-phospho-D-ribosyl)imidazole-4-carboxylate from 5-amino-1-(5-phospho-D-ribosyl)imidazole (carboxylase route): step 1/1. The chain is Phosphoribosylaminoimidazole carboxylase, chloroplastic (PURKE) from Vigna aconitifolia (Moth bean).